Reading from the N-terminus, the 916-residue chain is Probable dipeptidyl-aminopeptidase B (916 aa).

Disordered regions lie at residues 1–35 and 67–86; these read MGRTGDLENAEFFPMTRRRSTSGTSSRSSTDSGLS and DAEADVDEPFLPTSSKKLGS. Residues 1 to 92 lie on the Cytoplasmic side of the membrane; sequence MGRTGDLENA…KLGSGSRTRQ (92 aa). Positions 21 to 35 are enriched in low complexity; that stretch reads TSGTSSRSSTDSGLS. Residues 93-113 traverse the membrane as a helical; Signal-anchor for type II membrane protein segment; the sequence is IFWALVILCLGGWVLALVLFL. Residues 114–916 lie on the Vacuolar side of the membrane; it reads THGRASSQTA…VKRSVPAFAH (803 aa). 2 N-linked (GlcNAc...) asparagine glycosylation sites follow: Asn349 and Asn640. The active-site Charge relay system is the Ser754. 2 N-linked (GlcNAc...) asparagine glycosylation sites follow: Asn808 and Asn813. Catalysis depends on charge relay system residues Asp831 and His864.

It belongs to the peptidase S9B family.

It is found in the vacuole membrane. It catalyses the reaction Release of an N-terminal dipeptide, Xaa-Yaa-|-Zaa-, from a polypeptide, preferentially when Yaa is Pro, provided Zaa is neither Pro nor hydroxyproline.. Its function is as follows. Type IV dipeptidyl-peptidase which removes N-terminal dipeptides sequentially from polypeptides having unsubstituted N-termini provided that the penultimate residue is proline. The chain is Probable dipeptidyl-aminopeptidase B (dapB) from Aspergillus flavus (strain ATCC 200026 / FGSC A1120 / IAM 13836 / NRRL 3357 / JCM 12722 / SRRC 167).